The following is a 146-amino-acid chain: Urease accessory protein UreE 1 (146 aa).

The protein belongs to the UreE family.

It localises to the cytoplasm. Its function is as follows. Involved in urease metallocenter assembly. Binds nickel. Probably functions as a nickel donor during metallocenter assembly. This is Urease accessory protein UreE 1 from Pseudomonas syringae pv. syringae (strain B728a).